The chain runs to 327 residues: Malate dehydrogenase (327 aa).

12–18 (GAAGQIA) is a binding site for NAD(+). Substrate contacts are provided by Arg93 and Arg99. NAD(+) contacts are provided by residues Asn106, Gln113, and 130–132 (VGN). Residues Asn132 and Arg163 each coordinate substrate. His188 acts as the Proton acceptor in catalysis.

The protein belongs to the LDH/MDH superfamily. MDH type 2 family.

The catalysed reaction is (S)-malate + NAD(+) = oxaloacetate + NADH + H(+). Functionally, catalyzes the reversible oxidation of malate to oxaloacetate. This Acidiphilium cryptum (strain JF-5) protein is Malate dehydrogenase.